A 339-amino-acid polypeptide reads, in one-letter code: MYTLARQLLFKLSPETSHDLSLDLIGAGGRLGLNGLLCKAPASLPVNVMGLQFPNPVGLAAGLDKNGAAIDGFAQLGFGFVEIGTVTPRPQPGNPKPRIFRLPEAEAIINRMGFNNLGVDNLLARVAAAKYKGVLGINIGKNFDTPVERAVDDYLICLDKVYAHASYVTVNVSSPNTPGLRSLQFGDSLKQLLADLATRRAELALRHGKHVPLAIKIAPDMTDEETAQVAQALIETGMDAVIATNTTLSRVGVEGMEHGDEAGGLSGAPVREKSTHTVKVLASELGGKLPIIAAGGITEGKHAAEKIAAGASLVQIYSGFIYKGPALIRESVDAIAAKR.

FMN contacts are provided by residues 61–65 (AGLDK) and threonine 85. Lysine 65 is a substrate binding site. 110-114 (NRMGF) is a binding site for substrate. FMN contacts are provided by asparagine 138 and asparagine 171. Asparagine 171 lines the substrate pocket. The Nucleophile role is filled by serine 174. Residue asparagine 176 participates in substrate binding. Lysine 216 and threonine 244 together coordinate FMN. Substrate is bound at residue 245 to 246 (NT). Residues glycine 267, glycine 296, and 317-318 (YS) contribute to the FMN site.

The protein belongs to the dihydroorotate dehydrogenase family. Type 2 subfamily. In terms of assembly, monomer. Requires FMN as cofactor.

The protein resides in the cell membrane. The catalysed reaction is (S)-dihydroorotate + a quinone = orotate + a quinol. The protein operates within pyrimidine metabolism; UMP biosynthesis via de novo pathway; orotate from (S)-dihydroorotate (quinone route): step 1/1. Functionally, catalyzes the conversion of dihydroorotate to orotate with quinone as electron acceptor. This Pseudomonas fluorescens (strain Pf0-1) protein is Dihydroorotate dehydrogenase (quinone).